A 158-amino-acid polypeptide reads, in one-letter code: Cyclic pyranopterin monophosphate synthase (158 aa).

Substrate is bound by residues 75–77 (LCH) and 113–114 (ME). D128 is an active-site residue.

The protein belongs to the MoaC family. As to quaternary structure, homohexamer; trimer of dimers.

It catalyses the reaction (8S)-3',8-cyclo-7,8-dihydroguanosine 5'-triphosphate = cyclic pyranopterin phosphate + diphosphate. It participates in cofactor biosynthesis; molybdopterin biosynthesis. In terms of biological role, catalyzes the conversion of (8S)-3',8-cyclo-7,8-dihydroguanosine 5'-triphosphate to cyclic pyranopterin monophosphate (cPMP). This Paraburkholderia phytofirmans (strain DSM 17436 / LMG 22146 / PsJN) (Burkholderia phytofirmans) protein is Cyclic pyranopterin monophosphate synthase.